Here is a 147-residue protein sequence, read N- to C-terminus: Adenylylsulfatase HINT1 (147 aa).

One can recognise an HIT domain in the interval 37–147 (IFDKIISKEI…GGRQMNWPPG (111 aa)). The Histidine triad motif motif lies at 131–135 (HIHVH). The active-site Tele-AMP-histidine intermediate is His133. His135 lines the substrate pocket.

It localises to the peroxisome. The protein resides in the plastid. The protein localises to the chloroplast. The enzyme catalyses adenosine 5'-phosphosulfate + H2O = sulfate + AMP + 2 H(+). Possesses adenylylsulfatase activity in vitro. This Arabidopsis thaliana (Mouse-ear cress) protein is Adenylylsulfatase HINT1.